Reading from the N-terminus, the 434-residue chain is Nicotinate phosphoribosyltransferase (434 aa).

Phosphohistidine; by autocatalysis is present on histidine 242.

It belongs to the NAPRTase family. Transiently phosphorylated on a His residue during the reaction cycle. Phosphorylation strongly increases the affinity for substrates and increases the rate of nicotinate D-ribonucleotide production. Dephosphorylation regenerates the low-affinity form of the enzyme, leading to product release.

It carries out the reaction nicotinate + 5-phospho-alpha-D-ribose 1-diphosphate + ATP + H2O = nicotinate beta-D-ribonucleotide + ADP + phosphate + diphosphate. It functions in the pathway cofactor biosynthesis; NAD(+) biosynthesis; nicotinate D-ribonucleotide from nicotinate: step 1/1. Its function is as follows. Catalyzes the synthesis of beta-nicotinate D-ribonucleotide from nicotinate and 5-phospho-D-ribose 1-phosphate at the expense of ATP. The polypeptide is Nicotinate phosphoribosyltransferase (Bartonella quintana (strain Toulouse) (Rochalimaea quintana)).